The chain runs to 185 residues: Adenine phosphoribosyltransferase (185 aa).

The protein belongs to the purine/pyrimidine phosphoribosyltransferase family. Homodimer.

The protein localises to the cytoplasm. It carries out the reaction AMP + diphosphate = 5-phospho-alpha-D-ribose 1-diphosphate + adenine. It participates in purine metabolism; AMP biosynthesis via salvage pathway; AMP from adenine: step 1/1. Its function is as follows. Catalyzes a salvage reaction resulting in the formation of AMP, that is energically less costly than de novo synthesis. The protein is Adenine phosphoribosyltransferase of Aliarcobacter butzleri (strain RM4018) (Arcobacter butzleri).